A 292-amino-acid chain; its full sequence is MFTGSIVALITPMDEKGNVCRASLKKLIDYHVANGTSAIVSVGTTGESATLSHDEHADVVMMTLELADGRIPVIAGTGANATSEAISLTQRFNDSGIAGCLTVTPYYNRPTQEGLFQHFKAIAEHTDLPQILYNVPSRTGCDMLPETVGRLSKIKNIVGIKEATGNLSRVHLIKELVNEDFALLSGDDATAMDFMQLGGHGVISVTTNVAARDMADMCRLAAEGKFDDARIINRRLMPLHHKLFVEPNPVPVKWACKELGLVATDTLRLPMTPITDAGRDIVGSALKHAGLL.

T45 is a pyruvate binding site. Residue Y133 is the Proton donor/acceptor of the active site. The active-site Schiff-base intermediate with substrate is the K161. Pyruvate is bound at residue I203.

Belongs to the DapA family. Homotetramer; dimer of dimers.

The protein resides in the cytoplasm. The catalysed reaction is L-aspartate 4-semialdehyde + pyruvate = (2S,4S)-4-hydroxy-2,3,4,5-tetrahydrodipicolinate + H2O + H(+). Its pathway is amino-acid biosynthesis; L-lysine biosynthesis via DAP pathway; (S)-tetrahydrodipicolinate from L-aspartate: step 3/4. In terms of biological role, catalyzes the condensation of (S)-aspartate-beta-semialdehyde [(S)-ASA] and pyruvate to 4-hydroxy-tetrahydrodipicolinate (HTPA). This chain is 4-hydroxy-tetrahydrodipicolinate synthase, found in Cronobacter sakazakii (strain ATCC BAA-894) (Enterobacter sakazakii).